A 311-amino-acid polypeptide reads, in one-letter code: MAKRDYLKITDTTLAEAHRVLRLAARLKEEPKGRRTTMLAGRAIAVVLEKASTRTRVSFEVGIAQLGAQPVVLSTQGSQLARGEPIRDTARVLARYCDAIAFRTSSTARLLEMAEASVPVINALSDDGHPVQVLSDIFTIQEALAASGDRTGIAGRRVAFLGDCASNMARSWLEAAQLFDFHLVLAGPEGYMPPADEVERARKTGHVTITHDPREGAAGADVVNTDVWASMGHEAEAEKRRAAFAGWTVDAKVMARAAQHSIVLHCLPAHRGEEIDDETLEGPRSRVWDQAENRLHVQKALMLWLLGVELA.

Carbamoyl phosphate is bound by residues 52-55 (STRT), Gln79, Arg103, and 129-132 (HPVQ). L-ornithine-binding positions include Asn167, Asp226, and 230 to 231 (SM). Residues 266–267 (CL) and Arg294 contribute to the carbamoyl phosphate site.

The protein belongs to the aspartate/ornithine carbamoyltransferase superfamily. OTCase family.

The protein resides in the cytoplasm. The enzyme catalyses carbamoyl phosphate + L-ornithine = L-citrulline + phosphate + H(+). Its pathway is amino-acid biosynthesis; L-arginine biosynthesis; L-arginine from L-ornithine and carbamoyl phosphate: step 1/3. In terms of biological role, reversibly catalyzes the transfer of the carbamoyl group from carbamoyl phosphate (CP) to the N(epsilon) atom of ornithine (ORN) to produce L-citrulline. The chain is Ornithine carbamoyltransferase from Sorangium cellulosum (strain So ce56) (Polyangium cellulosum (strain So ce56)).